The following is a 141-amino-acid chain: Nucleoside diphosphate kinase (141 aa).

6 residues coordinate ATP: lysine 11, phenylalanine 59, arginine 87, threonine 93, arginine 104, and asparagine 114. Residue histidine 117 is the Pros-phosphohistidine intermediate of the active site.

This sequence belongs to the NDK family. Homotetramer. It depends on Mg(2+) as a cofactor.

The protein resides in the cytoplasm. The enzyme catalyses a 2'-deoxyribonucleoside 5'-diphosphate + ATP = a 2'-deoxyribonucleoside 5'-triphosphate + ADP. The catalysed reaction is a ribonucleoside 5'-diphosphate + ATP = a ribonucleoside 5'-triphosphate + ADP. Major role in the synthesis of nucleoside triphosphates other than ATP. The ATP gamma phosphate is transferred to the NDP beta phosphate via a ping-pong mechanism, using a phosphorylated active-site intermediate. The sequence is that of Nucleoside diphosphate kinase from Bordetella petrii (strain ATCC BAA-461 / DSM 12804 / CCUG 43448).